Reading from the N-terminus, the 129-residue chain is Procyclic form-specific polypeptide A-beta (129 aa).

The N-terminal stretch at 1–27 (MAPRSLYLLAVLLFSANLFAGVGFAAA) is a signal peptide. Positions 27–111 (AAEGPEDKGL…PEPEPGAATL (85 aa)) are disordered. Over residues 53 to 104 (DDTNGTDPDPEPEPEPEPEPEPEPEPEPEPEPEPEPEPEPEPEPEPEPEPEP) the composition is skewed to acidic residues. N56 is a glycosylation site (N-linked (GlcNAc...) asparagine). A run of 24 repeats spans residues 59–60 (DP), 61–62 (DP), 63–64 (EP), 65–66 (EP), 67–68 (EP), 69–70 (EP), 71–72 (EP), 73–74 (EP), 75–76 (EP), 77–78 (EP), 79–80 (EP), 81–82 (EP), 83–84 (EP), 85–86 (EP), 87–88 (EP), 89–90 (EP), 91–92 (EP), 93–94 (EP), 95–96 (EP), 97–98 (EP), 99–100 (EP), 101–102 (EP), 103–104 (EP), and 105–106 (EP). The tract at residues 59–106 (DPDPEPEPEPEPEPEPEPEPEPEPEPEPEPEPEPEPEPEPEPEPEPEP) is 24 X 2 AA tandem repeats of [DE]-P. G107 carries the GPI-anchor amidated glycine lipid modification. The propeptide occupies 108–129 (AATLKSVALPFAIAAVGLVAAF).

The protein localises to the cell membrane. In terms of biological role, major surface antigen of procyclic forms. This is Procyclic form-specific polypeptide A-beta (PARPA-BETA) from Trypanosoma brucei brucei.